The following is a 585-amino-acid chain: Arginine--tRNA ligase (585 aa).

The 'HIGH' region signature appears at 131–141; sequence ANPTGPMHVGH.

This sequence belongs to the class-I aminoacyl-tRNA synthetase family. Monomer.

It is found in the cytoplasm. The enzyme catalyses tRNA(Arg) + L-arginine + ATP = L-arginyl-tRNA(Arg) + AMP + diphosphate. The protein is Arginine--tRNA ligase of Chelativorans sp. (strain BNC1).